The chain runs to 202 residues: 3-isopropylmalate dehydratase small subunit (202 aa).

Belongs to the LeuD family. LeuD type 1 subfamily. Heterodimer of LeuC and LeuD.

It carries out the reaction (2R,3S)-3-isopropylmalate = (2S)-2-isopropylmalate. It functions in the pathway amino-acid biosynthesis; L-leucine biosynthesis; L-leucine from 3-methyl-2-oxobutanoate: step 2/4. In terms of biological role, catalyzes the isomerization between 2-isopropylmalate and 3-isopropylmalate, via the formation of 2-isopropylmaleate. This is 3-isopropylmalate dehydratase small subunit from Rhizobium etli (strain ATCC 51251 / DSM 11541 / JCM 21823 / NBRC 15573 / CFN 42).